The chain runs to 682 residues: Serine/threonine-protein kinase PAK 6 (682 aa).

Disordered stretches follow at residues 1–30 (MFRK…DPKE), 132–170 (SPQS…QALP), 200–256 (LQSS…QESS), and 270–367 (PATG…NLYL). The CRIB domain maps to 12-25 (ISAPQNFQHRVHTS). Residues 26-407 (FDPKEGKFVG…VVDQGDPRLL (382 aa)) form a linker region. Polar residues-rich tracts occupy residues 270 to 279 (PATGAASSSK) and 297 to 334 (KDSS…QKSL). The region spanning 408 to 659 (LDSYVKIGEG…AQELLDHPFL (252 aa)) is the Protein kinase domain. Residues 414–422 (IGEGSTGIV) and Lys-437 each bind ATP. Catalysis depends on Asp-527, which acts as the Proton acceptor. Ser-561 carries the post-translational modification Phosphoserine; by autocatalysis.

It belongs to the protein kinase superfamily. STE Ser/Thr protein kinase family. STE20 subfamily. As to quaternary structure, interacts tightly with GTP-bound but not GDP-bound CDC42/p21 and RAC1. Interacts with the androgen receptor AR. Interacts with IQGAP1 and PPM1B. Post-translationally, autophosphorylated. Phosphorylated by MAP2K6/MAPKK6, leading to PAK6 activation.

The protein localises to the cytoplasm. Its subcellular location is the nucleus. The enzyme catalyses L-seryl-[protein] + ATP = O-phospho-L-seryl-[protein] + ADP + H(+). It carries out the reaction L-threonyl-[protein] + ATP = O-phospho-L-threonyl-[protein] + ADP + H(+). Serine/threonine protein kinase that plays a role in the regulation of gene transcription. The kinase activity is induced by various effectors including AR or MAP2K6/MAPKK6. Phosphorylates the DNA-binding domain of androgen receptor/AR and thereby inhibits AR-mediated transcription. Also inhibits ESR1-mediated transcription. May play a role in cytoskeleton regulation by interacting with IQGAP1. May protect cells from apoptosis through phosphorylation of BAD. This is Serine/threonine-protein kinase PAK 6 (Pak6) from Mus musculus (Mouse).